Reading from the N-terminus, the 151-residue chain is Large ribosomal subunit protein bL9 (151 aa).

The protein belongs to the bacterial ribosomal protein bL9 family.

Its function is as follows. Binds to the 23S rRNA. This is Large ribosomal subunit protein bL9 from Prochlorococcus marinus (strain AS9601).